The primary structure comprises 243 residues: Biosynthetic peptidoglycan transglycosylase (243 aa).

Residues 22–42 traverse the membrane as a helical segment; it reads LIVLLVLALMSVLQVIVFRFV.

This sequence belongs to the glycosyltransferase 51 family.

The protein resides in the cell inner membrane. It carries out the reaction [GlcNAc-(1-&gt;4)-Mur2Ac(oyl-L-Ala-gamma-D-Glu-L-Lys-D-Ala-D-Ala)](n)-di-trans,octa-cis-undecaprenyl diphosphate + beta-D-GlcNAc-(1-&gt;4)-Mur2Ac(oyl-L-Ala-gamma-D-Glu-L-Lys-D-Ala-D-Ala)-di-trans,octa-cis-undecaprenyl diphosphate = [GlcNAc-(1-&gt;4)-Mur2Ac(oyl-L-Ala-gamma-D-Glu-L-Lys-D-Ala-D-Ala)](n+1)-di-trans,octa-cis-undecaprenyl diphosphate + di-trans,octa-cis-undecaprenyl diphosphate + H(+). It participates in cell wall biogenesis; peptidoglycan biosynthesis. In terms of biological role, peptidoglycan polymerase that catalyzes glycan chain elongation from lipid-linked precursors. In Xylella fastidiosa (strain 9a5c), this protein is Biosynthetic peptidoglycan transglycosylase.